Here is a 431-residue protein sequence, read N- to C-terminus: tRNA (adenine(37)-N6)-methyltransferase (431 aa).

Residues 30-168 enclose the TsaA-like domain; sequence TEPIGYLESC…YIADYDSPQN (139 aa). Residues 47–49, 90–91, Arg117, Leu127, and 148–151 each bind S-adenosyl-L-methionine; these read PRQ, HK, and IHGT. Disordered regions lie at residues 167–189 and 201–243; these read QNLE…ATAN and KAQP…DRER. Residues 207-243 show a composition bias toward basic and acidic residues; the sequence is STKEKPKCREHRTSDENSQKFRDTSEIQHTLPEDRER.

The protein belongs to the tRNA methyltransferase O family.

The enzyme catalyses N(6)-L-threonylcarbamoyladenosine(37) in tRNA + S-adenosyl-L-methionine = N(6)-methyl,N(6)-L-threonylcarbamoyladenosine(37) in tRNA + S-adenosyl-L-homocysteine + H(+). In terms of biological role, S-adenosyl-L-methionine-dependent methyltransferase responsible for the addition of the methyl group in the formation of N6-methyl-N6-threonylcarbamoyladenosine at position 37 (m(6)t(6)A37) of the tRNA anticodon loop of tRNA(Ser)(GCU). The methyl group of m(6)t(6)A37 may improve the efficiency of the tRNA decoding ability. May bind to tRNA. The chain is tRNA (adenine(37)-N6)-methyltransferase from Rattus norvegicus (Rat).